A 70-amino-acid polypeptide reads, in one-letter code: Small ribosomal subunit protein bS21 (70 aa).

It belongs to the bacterial ribosomal protein bS21 family.

This Methylobacillus flagellatus (strain ATCC 51484 / DSM 6875 / VKM B-1610 / KT) protein is Small ribosomal subunit protein bS21.